A 312-amino-acid polypeptide reads, in one-letter code: Non-structural protein 12A (312 aa).

The segment covering 1-23 has biased composition (low complexity); it reads MFKSGSGSLKRSGSISSVKSFSG. Disordered stretches follow at residues 1 to 37, 63 to 97, and 114 to 162; these read MFKSGSGSLKRSGSISSVKSFSGDSEKGLPPISRGSV, VPEKTKSEGNLKNKSSVITGNFESSGPTNAHYNQN, and KGRG…TGDG. A compositionally biased stretch (basic and acidic residues) spans 63–73; that stretch reads VPEKTKSEGNL. Over residues 74 to 97 the composition is skewed to polar residues; sequence KNKSSVITGNFESSGPTNAHYNQN. Basic and acidic residues predominate over residues 122–134; that stretch reads DARHTATDSRLSQ.

This sequence belongs to the phytoreovirus non-structural protein Pns12A family.

It localises to the host cytoplasm. Functionally, constituent of viral factories. This chain is Non-structural protein 12A, found in Rice dwarf virus (isolate Fujian) (RDV).